The chain runs to 99 residues: Small ribosomal subunit protein uS14c (99 aa).

Positions 46–66 (LQSSPRNSAPTRLHRRCSSTG) are disordered.

It belongs to the universal ribosomal protein uS14 family. Part of the 30S ribosomal subunit.

The protein localises to the plastid. It is found in the chloroplast. In terms of biological role, binds 16S rRNA, required for the assembly of 30S particles. The chain is Small ribosomal subunit protein uS14c from Pinus thunbergii (Japanese black pine).